A 477-amino-acid polypeptide reads, in one-letter code: Methylenetetrahydrofolate--tRNA-(uracil-5-)-methyltransferase TrmFO (477 aa).

14–19 (GGGLAG) contacts FAD.

The protein belongs to the MnmG family. TrmFO subfamily. Requires FAD as cofactor.

The protein localises to the cytoplasm. It catalyses the reaction uridine(54) in tRNA + (6R)-5,10-methylene-5,6,7,8-tetrahydrofolate + NADH + H(+) = 5-methyluridine(54) in tRNA + (6S)-5,6,7,8-tetrahydrofolate + NAD(+). The catalysed reaction is uridine(54) in tRNA + (6R)-5,10-methylene-5,6,7,8-tetrahydrofolate + NADPH + H(+) = 5-methyluridine(54) in tRNA + (6S)-5,6,7,8-tetrahydrofolate + NADP(+). Functionally, catalyzes the folate-dependent formation of 5-methyl-uridine at position 54 (M-5-U54) in all tRNAs. The polypeptide is Methylenetetrahydrofolate--tRNA-(uracil-5-)-methyltransferase TrmFO (Rhizobium etli (strain ATCC 51251 / DSM 11541 / JCM 21823 / NBRC 15573 / CFN 42)).